Consider the following 283-residue polypeptide: uncharacterized protein (283 aa).

The segment covering Ser208 to Lys232 has biased composition (basic and acidic residues). The disordered stretch occupies residues Ser208–Lys237.

This is an uncharacterized protein from Saccharomyces cerevisiae (strain ATCC 204508 / S288c) (Baker's yeast).